The primary structure comprises 429 residues: Adenosylhomocysteinase (429 aa).

The substrate site is built by threonine 64, aspartate 136, and glutamate 161. 162-164 is a binding site for NAD(+); that stretch reads TTT. Substrate-binding residues include lysine 191 and aspartate 195. Residues asparagine 196, 225-230, glutamate 248, asparagine 283, 304-306, and asparagine 351 each bind NAD(+); these read GYGWCG and SGH.

This sequence belongs to the adenosylhomocysteinase family. The cofactor is NAD(+).

It localises to the cytoplasm. The catalysed reaction is S-adenosyl-L-homocysteine + H2O = L-homocysteine + adenosine. It functions in the pathway amino-acid biosynthesis; L-homocysteine biosynthesis; L-homocysteine from S-adenosyl-L-homocysteine: step 1/1. Functionally, may play a key role in the regulation of the intracellular concentration of adenosylhomocysteine. This chain is Adenosylhomocysteinase, found in Gloeothece citriformis (strain PCC 7424) (Cyanothece sp. (strain PCC 7424)).